Here is a 1406-residue protein sequence, read N- to C-terminus: DNA-directed RNA polymerase subunit beta' (1406 aa).

The Zn(2+) site is built by C70, C72, C85, and C88. Residues D460, D462, and D464 each coordinate Mg(2+). The Zn(2+) site is built by C814, C888, C895, and C898.

Belongs to the RNA polymerase beta' chain family. The RNAP catalytic core consists of 2 alpha, 1 beta, 1 beta' and 1 omega subunit. When a sigma factor is associated with the core the holoenzyme is formed, which can initiate transcription. Requires Mg(2+) as cofactor. Zn(2+) is required as a cofactor.

The catalysed reaction is RNA(n) + a ribonucleoside 5'-triphosphate = RNA(n+1) + diphosphate. In terms of biological role, DNA-dependent RNA polymerase catalyzes the transcription of DNA into RNA using the four ribonucleoside triphosphates as substrates. This Colwellia psychrerythraea (strain 34H / ATCC BAA-681) (Vibrio psychroerythus) protein is DNA-directed RNA polymerase subunit beta'.